A 468-amino-acid chain; its full sequence is BTB and MATH domain-containing protein 45 (468 aa).

The MATH domain maps to 7–124 (VFELSHVFKD…DDSIIIEVLV (118 aa)). BTB domains are found at residues 148–215 (SDGI…IDDD) and 304–368 (SDVI…IDDL).

The sequence is that of BTB and MATH domain-containing protein 45 (bath-45) from Caenorhabditis elegans.